The chain runs to 257 residues: Ribonuclease HII (257 aa).

An RNase H type-2 domain is found at 72-257; it reads TYIAGIDEVG…FAPIKDMIQK (186 aa). Asp78, Glu79, and Asp170 together coordinate a divalent metal cation.

It belongs to the RNase HII family. It depends on Mn(2+) as a cofactor. Mg(2+) serves as cofactor.

It localises to the cytoplasm. The enzyme catalyses Endonucleolytic cleavage to 5'-phosphomonoester.. Its function is as follows. Endonuclease that specifically degrades the RNA of RNA-DNA hybrids. In Bacillus cereus (strain ATCC 10987 / NRS 248), this protein is Ribonuclease HII.